The sequence spans 114 residues: Beta-microseminoprotein (114 aa).

Positions 1-20 (MNVLLGGFVIFATFVTLCNA) are cleaved as a signal peptide. Disulfide bonds link Cys22-Cys70, Cys38-Cys62, Cys57-Cys93, Cys60-Cys69, and Cys84-Cys107.

It belongs to the beta-microseminoprotein family. As to quaternary structure, homodimer; Interacts with PI16.

It localises to the secreted. This Macaca mulatta (Rhesus macaque) protein is Beta-microseminoprotein (MSMB).